The chain runs to 380 residues: Putative glutamate--cysteine ligase 2-1 (380 aa).

The protein belongs to the glutamate--cysteine ligase type 2 family. YbdK subfamily.

It catalyses the reaction L-cysteine + L-glutamate + ATP = gamma-L-glutamyl-L-cysteine + ADP + phosphate + H(+). Functionally, ATP-dependent carboxylate-amine ligase which exhibits weak glutamate--cysteine ligase activity. The chain is Putative glutamate--cysteine ligase 2-1 from Mycolicibacterium vanbaalenii (strain DSM 7251 / JCM 13017 / BCRC 16820 / KCTC 9966 / NRRL B-24157 / PYR-1) (Mycobacterium vanbaalenii).